The chain runs to 208 residues: N-(5'-phosphoribosyl)anthranilate isomerase (208 aa).

It belongs to the TrpF family.

It catalyses the reaction N-(5-phospho-beta-D-ribosyl)anthranilate = 1-(2-carboxyphenylamino)-1-deoxy-D-ribulose 5-phosphate. It participates in amino-acid biosynthesis; L-tryptophan biosynthesis; L-tryptophan from chorismate: step 3/5. The protein is N-(5'-phosphoribosyl)anthranilate isomerase of Natronomonas pharaonis (strain ATCC 35678 / DSM 2160 / CIP 103997 / JCM 8858 / NBRC 14720 / NCIMB 2260 / Gabara) (Halobacterium pharaonis).